A 161-amino-acid chain; its full sequence is Nucleotide-binding protein Pnec_0318 (161 aa).

This sequence belongs to the YajQ family.

Functionally, nucleotide-binding protein. The protein is Nucleotide-binding protein Pnec_0318 of Polynucleobacter necessarius subsp. necessarius (strain STIR1).